The following is a 358-amino-acid chain: Trace amine-associated receptor 7e (358 aa).

The Extracellular portion of the chain corresponds to 1-47; it reads MATDDASFPWDQDSILSRDLLSALSSQLCYENLNRSCIRSPYSPGPR. A glycan (N-linked (GlcNAc...) asparagine) is linked at Asn-34. Intrachain disulfides connect Cys-37-Cys-201 and Cys-120-Cys-205. Residues 48-68 traverse the membrane as a helical segment; that stretch reads LILHAVFGFSAVLAVCGNLLV. Residues 69-83 are Cytoplasmic-facing; sequence MTSILHFRQLHSPAN. A helical transmembrane segment spans residues 84 to 104; sequence FLVASLACADLLVGLTVMPFS. Residues 105–121 lie on the Extracellular side of the membrane; it reads MVRSVEGCWYFGDIYCK. The chain crosses the membrane as a helical span at residues 122-143; it reads FHSSFDVSFCYSSIFHLCFISV. Over 144–166 the chain is Cytoplasmic; it reads DRYIAVSDPLIYLTRFTASVSGK. A helical membrane pass occupies residues 167-187; the sequence is CITFSWFLSIIYSFSLLYTGA. Residues 188–212 lie on the Extracellular side of the membrane; the sequence is SEAGLEDLVSALTCVGGCQLAVNQS. Asn-210 carries N-linked (GlcNAc...) asparagine glycosylation. The chain crosses the membrane as a helical span at residues 213–233; it reads WVFINFLLFLVPTLVMMTVYS. Topologically, residues 234–274 are cytoplasmic; the sequence is KVFLIAKQQAQNIEKIGKQTARASESYKDRVAKRERKAAKT. The helical transmembrane segment at 275-295 threads the bilayer; it reads LGITVAAFLLSWLPYFIDSII. Over 296–309 the chain is Extracellular; the sequence is DAFLGFITPTYVYE. Residues 310-333 form a helical membrane-spanning segment; that stretch reads ILVWIAYYNSAMNPLIYAFFYPWF. The Cytoplasmic segment spans residues 334–358; sequence RKAIKLIVTGKILRENSSATNLFPE.

It belongs to the G-protein coupled receptor 1 family.

It is found in the cell membrane. Functionally, olfactory receptor specific for N,N-dimethylalkylamines trace amines. Trace amine compounds are enriched in animal body fluids and act on trace amine-associated receptors (TAARs) to elicit both intraspecific and interspecific innate behaviors. Ligand-binding causes a conformation change that triggers signaling via G(s)-class of G alpha proteins (GNAL or GNAS). The sequence is that of Trace amine-associated receptor 7e from Rattus norvegicus (Rat).